We begin with the raw amino-acid sequence, 773 residues long: DNA gyrase subunit B (773 aa).

The 115-residue stretch at 416 to 530 (SEIFLVEGDS…QGHVFIAQAP (115 aa)) folds into the Toprim domain. Mg(2+) is bound by residues Glu-422, Asp-495, and Asp-497.

This sequence belongs to the type II topoisomerase GyrB family. In terms of assembly, heterotetramer, composed of two GyrA and two GyrB chains. In the heterotetramer, GyrA contains the active site tyrosine that forms a transient covalent intermediate with DNA, while GyrB binds cofactors and catalyzes ATP hydrolysis. The cofactor is Mg(2+). Mn(2+) is required as a cofactor. Ca(2+) serves as cofactor.

It localises to the cytoplasm. The enzyme catalyses ATP-dependent breakage, passage and rejoining of double-stranded DNA.. In terms of biological role, a type II topoisomerase that negatively supercoils closed circular double-stranded (ds) DNA in an ATP-dependent manner to modulate DNA topology and maintain chromosomes in an underwound state. Negative supercoiling favors strand separation, and DNA replication, transcription, recombination and repair, all of which involve strand separation. Also able to catalyze the interconversion of other topological isomers of dsDNA rings, including catenanes and knotted rings. Type II topoisomerases break and join 2 DNA strands simultaneously in an ATP-dependent manner. The chain is DNA gyrase subunit B from Helicobacter pylori (strain J99 / ATCC 700824) (Campylobacter pylori J99).